An 80-amino-acid chain; its full sequence is Large ribosomal subunit protein bL31B (80 aa).

This sequence belongs to the bacterial ribosomal protein bL31 family. Type B subfamily. Part of the 50S ribosomal subunit.

This is Large ribosomal subunit protein bL31B from Shouchella clausii (strain KSM-K16) (Alkalihalobacillus clausii).